The following is a 299-amino-acid chain: HTH-type transcriptional regulator ArgP (299 aa).

One can recognise an HTH lysR-type domain in the interval 4–60 (PDYRTLQALDAVIRERGFERAAQKLCITQSAVSQRIKQLENMFGQPLLVRTVPPRPT). The segment at residues 21–40 (FERAAQKLCITQSAVSQRIK) is a DNA-binding region (H-T-H motif).

Belongs to the LysR transcriptional regulatory family. As to quaternary structure, homodimer.

Controls the transcription of genes involved in arginine and lysine metabolism. The protein is HTH-type transcriptional regulator ArgP of Erwinia tasmaniensis (strain DSM 17950 / CFBP 7177 / CIP 109463 / NCPPB 4357 / Et1/99).